Here is a 225-residue protein sequence, read N- to C-terminus: Small ribosomal subunit protein uS2 (225 aa).

Over residues 1 to 14 (MAEAKPAPEKEAAA) the composition is skewed to basic and acidic residues. Residues 1-33 (MAEAKPAPEKEAAAKTESVPVETEGEGPSVKEG) are disordered.

It belongs to the universal ribosomal protein uS2 family.

The polypeptide is Small ribosomal subunit protein uS2 (Methanosarcina barkeri (strain Fusaro / DSM 804)).